A 432-amino-acid polypeptide reads, in one-letter code: Major royal jelly protein 1 (432 aa).

Positions 1–19 (MTRLFMLVCLGIVCQGTTG) are cleaved as a signal peptide. Residues Asn28, Asn144, and Asn177 are each glycosylated (N-linked (GlcNAc...) asparagine). 3 cysteine pairs are disulfide-bonded: Cys118-Cys150, Cys132-Cys195, and Cys329-Cys416. 24-methylenecholesterol is bound at residue Pro364. The residue at position 431 (His431) is a Histidine amide; atypical. Leucine amide; atypical is present on Leu432.

This sequence belongs to the major royal jelly protein family. Is present in royal jelly in different forms: monomer (55 kDa), oligomeric subunit (ca. 287-420 kDa), and water-insoluble aggregates in sediment after interaction with fatty acids. Component of the apisin heterooligomer complex consisting of 4 copies of MRJP1 and 4 copies of apisimin, associated with 8 molecules of 24-methylenecholesterol; apisimin forms a bridge connecting two MRJP1 dimers. At low pH multiple apisin octamers stack to form filaments that increase the viscosity of royal jelly; these filaments may be stabilized by bound fatty acid chains. The mandibular gland, where royal jelly is produced, has low pH conditions favouring filament formation, while the higher pH of the insect midgut favors filament disassembly. N-glycosylated on Asn-28, Asn-144 and Asn-177. Glycosylation is required to prevent apisin multimers from aggregating. Post-translationally, jellein-2 is probably processed to yield jellein-1 and jellein-4. As to expression, found in and secreted from the hypopharyngeal glands of the worker honey bee (at protein level); expression peaks at 12 days post eclosion. Expressed in the brains of worker bees (at protein level); found in antennal lobe, optical lobe and a subpopulation of Kenyon cells in the mushroom body. Found in the ommatidia of worker bees (at protein level). Expressed in the spermatheca of adult queen bees (at protein level); expression levels are higher in mated queens than in virgin queens. Expressed in queen bee ovaries and male drone testes.

Its subcellular location is the secreted. It is found in the cytoplasm. The protein localises to the cell projection. The protein resides in the rhabdomere. It localises to the cytoskeleton. Most abundant protein component of royal jelly, a substance produced in the hypopharyngeal gland containing proteins, free amino acids, fatty acids, sugars and other nutrients, which is fed to developing larvae by worker nurse bees. Major royal jelly proteins (Mrjps) are high in essential amino acids and probably have a nutritional function in larval food. All larvae are fed some royal jelly (also known as worker jelly) early in their development but it forms the principal source of nutrition for larvae destined to become queen bees. Induces the differentiation of honey bee larvae into queens through an Egfr-mediated signaling pathway. Promotes body size increase by activating p70 S6 kinase, stimulates ovary development by augmenting the titer of vitellogenin (Vg) and juvenile hormone, and reduces developmental time by increasing the activity of mitogen-activated protein kinase and inducing 20-hydroxyecdysone (ecdysterone, 20E) production. Together with apisimin forms the apisin complex that polymerizes at low pH, forming a fiber network and increasing the viscosity of royal jelly. The viscous royal Jelly placed in honeycomb cells containing larvae destined to become queens acts as both a food supply and an adhesive preventing larvae from falling out; queens are reared in special large cells oriented vertically. Produced in the spermatheca of adult queen bees, along with other major royal jelly proteins, where it may act as a nutrient supply for sperm stored by mated queens, or be involved in energy metabolism. Functionally, has antibacterial activity against the Gram-positive bacteria S.aureus ATCC 6535, S.saprophyticus and B.subtilis CCT2471, and the Gram-negative bacteria E.coli CCT1371, E.cloacae ATCC 23355, K.pneumoniae ATCC 13883 and P.aeruginosa ATCC 27853, and antifungal activity against C.albicans. Lack cytolytic activity and does not induce rat peritoneal mast cell degranulation. In terms of biological role, lacks antibacterial and antifungal activity. Lacks cytolytic activity and does not induce rat peritoneal mast cell degranulation. This Apis mellifera (Honeybee) protein is Major royal jelly protein 1.